The following is a 1688-amino-acid chain: MDAMGSAAEEGTQKKKRRPLVPPPPRPPRALFCLGLQNPFRKFCINIVEWKPFEMIILLTIFANCVALAIFLPMPEDDTNSTNSVLEKVEYIFLFIFTIESFLKIVAYGFILHTDAYLRNGWNILDFTIVSVGVFSVLLEQISKLQGLPAPGKSSGFNVKALRAFRVLRPLRLVSGVPSLQVVLNSIIKAMIPLLHIALLVLFMIIIYAIVGLELFSGKMHKTCYFKDTDITATVDNEKPAPCSSTGQGRQCSINGSECRGWWPGPNNGITHFDNFGFAMLTVYQCITMEGWTEVLYWVNDAIGNEWPWIYFVSLILLGSFFVLNLVLGVLSGEFTKEREKAKSRGAFQMLREQQAMDEDLRGYLDWITHAEVMDPDMEPRDGFSQLEEGGSETDSLYEIEGINKFIAFFRQWRLWHRLLRRKSRDLVKSRFFYWLVIIIILLNTVIIATEHHHQPDSLTKAQDIANEVLLALFTMEMIVKIYALGFQSYFMSLFNRFDSFVVCTGLLEVMLVASDIMSPLGISVLRCIRLLRIFKITRYWTSLNNLVASLLNSVRSIASLLLLLFLFMIIFALLGMQMFGGKFDFEDLEVRRSTFDTFPQALITVFQILTGEDWTAVMYNGIMAYGGPTYSGMSVCIYFIILFVCGNYILLNVFLAIAVDNLAEAENLTSAQKAKAEERKRKKLARANPDKTEEEKLLLAKKEQKAKGEGIPTTARLKIDEFESNVNEIKDPYPSADFPGDDEEEEPEIPISPRPRPLAELQLKEKAVPMPEASSFFIFSPTNKIRVLCHRIINATTFTNFILLFILLSSISLAAEDPIQPESFRNKVLSKLDIVFTVIFTTEIVLKMTAYGAFLHKGSFCRNSFNILDLSVVGVSLISMGIESSAISVVKILRVLRVLRPLRAINRAKGLKHVVQCLFVAIKTIGNIVLVTTLLQFMFSCIGVQLFKGKFYSCTDTTKITADECRGYFFVAKDGNPAHMEAVPRVWSHSDFHFDNVLSGMMSLFTISTFEGWPQLLYRAIDSHAEDMGPIYNYRIEIAVFFIVYIILIAFFMMNIFVGFVIVTFQEQGEQEYKDCELDKNQRQCVQYALKARPLRRYIPKNPHQYKIWYVVTSSYFEYLMFFLITLNTISLGMQHYGQTAEFSYMSDILNVAFTGIFTVEMFLKLAAFKAKGYFGDPWNVFDFLIVIGSVIDVILSEIDTPGIPATPGAEESSRISITFFRLFRVLRLVKLLSRGEGVRTLLWTFIKSFQALPYVALLIVMLFFIYAVIGMQVFGKIALVDGTHINRNSNFQTFPQAVLLLFRCATGEAWQEILLACSYGKLCDPMSDFQPGEEYTCGTSFAYFYFISFYMLCAFLIINLFVAVIMDNFDYLTRDWSILGPHHLDEFKRIWAEYDPEAKGRIKHLDVVTLLRRIQPPLGFGKFCPHRVACKRLVSMNMPLNSDGTVTFNATLFSLVRTALKIKTEGNFEQSNEELRMIIKKIWKRTSMKLLDQVIPPIGDDEVTVGKFYAIFLIQEHFRKFKKRQEEYYGYRPKKNANNVEIQAGLRTIEEEEGEGELQRAISGDLTPEEELERAMVEAAIEEGIYRRTGGLFGQEDSFHTGPVSPLHTITSQRPLRFSEAGSEDLDSPVFLPEPVFFPPPRRNRNTNNSTISRGLDQRLTTPDFERVQQSEEQWDTNSSISQATN.

Residues M1–P24 form a disordered region. Topologically, residues M1–K51 are cytoplasmic. Residues N38–F335 form an I repeat. A helical transmembrane segment spans residues P52–I70. Residues F71–K88 are Extracellular-facing. A glycan (N-linked (GlcNAc...) asparagine) is linked at N80. A helical transmembrane segment spans residues V89 to Y108. The Cytoplasmic segment spans residues G109 to N120. The chain crosses the membrane as a helical span at residues G121–L139. Residues E140–N158 are Extracellular-facing. The chain crosses the membrane as a helical span at residues V159–V177. The Cytoplasmic segment spans residues P178 to H196. Residues I197–F216 traverse the membrane as a helical segment. Topologically, residues S217–W307 are extracellular. Residue N255 is glycosylated (N-linked (GlcNAc...) asparagine). E290 lines the Ca(2+) pocket. Residues P308–S332 traverse the membrane as a helical segment. The Cytoplasmic portion of the chain corresponds to G333–R431. The interval Q355–E372 is binding to the beta subunit. The II repeat unit spans residues H417–L663. Residues F432–T450 traverse the membrane as a helical segment. The Extracellular segment spans residues E451–I465. A helical transmembrane segment spans residues A466–L485. Over G486 to S493 the chain is Cytoplasmic. Residues L494–L512 form a helical membrane-spanning segment. The Extracellular segment spans residues V513–G522. Residues I523–W541 traverse the membrane as a helical segment. Topologically, residues T542 to S560 are cytoplasmic. A helical transmembrane segment spans residues L561–F580. At G581–S635 the chain is on the extracellular side. Position 613 (E613) interacts with Ca(2+). The chain crosses the membrane as a helical span at residues V636 to V660. Residues D661 to T797 are Cytoplasmic-facing. 2 disordered regions span residues A672–E696 and E729–R755. The segment covering P740–E749 has biased composition (acidic residues). An III repeat occupies N784–F1066. A helical membrane pass occupies residues T798 to A816. Over E817 to K832 the chain is Extracellular. A helical transmembrane segment spans residues L833–Y852. The Cytoplasmic segment spans residues G853 to N864. Residues S865–I883 traverse the membrane as a helical segment. The Extracellular portion of the chain corresponds to E884–V890. The helical transmembrane segment at V891 to A909 threads the bilayer. The Cytoplasmic segment spans residues K910–N928. The chain crosses the membrane as a helical span at residues I929 to F948. Residues K949–E1038 are Extracellular-facing. The tract at residues R986–K1075 is dihydropyridine binding. E1012 is a Ca(2+) binding site. Residues I1039 to I1063 form a helical membrane-spanning segment. At V1064–S1116 the chain is on the cytoplasmic side. Residues N1103–F1371 form an IV repeat. The chain crosses the membrane as a helical span at residues Y1117–M1135. At Q1136–I1150 the chain is on the extracellular side. Residues L1151–F1170 traverse the membrane as a helical segment. Topologically, residues K1171–D1178 are cytoplasmic. A helical transmembrane segment spans residues P1179–L1197. Residues S1198–S1218 lie on the Extracellular side of the membrane. Residues I1219–G1237 form a helical membrane-spanning segment. Residues E1238–Y1256 are Cytoplasmic-facing. Residues V1257–F1276 form a helical membrane-spanning segment. Residues G1277–F1343 lie on the Extracellular side of the membrane. The segment at L1324–K1390 is dihydropyridine binding. The segment at E1336–S1379 is phenylalkylamine binding. The helical transmembrane segment at A1344–M1368 threads the bilayer. Topologically, residues D1369 to N1688 are cytoplasmic. 2 disordered regions span residues P1635–T1664 and R1669–N1688. The segment covering D1678 to N1688 has biased composition (polar residues).

It belongs to the calcium channel alpha-1 subunit (TC 1.A.1.11) family. In terms of assembly, multisubunit complex consisting of alpha-1, alpha-2, beta and delta subunits in a 1:1:1:1 ratio. The channel activity is directed by the pore-forming and voltage-sensitive alpha-1 subunit. In many cases, this subunit is sufficient to generate voltage-sensitive calcium channel activity. The auxiliary subunits beta and alpha-2/delta linked by a disulfide bridge regulate the channel activity. An additional gamma subunit is present only in skeletal muscle L-type channel. Phosphorylation by PKA stimulates the calcium channel function. In terms of tissue distribution, skeletal muscle specific.

It is found in the membrane. Functionally, voltage-sensitive calcium channels (VSCC) mediate the entry of calcium ions into excitable cells and are also involved in a variety of calcium-dependent processes, including muscle contraction, gene expression, cell motility, cell division and cell death. The isoform alpha-1S gives rise to L-type calcium currents. Long-lasting (L-type) calcium channels belong to the 'high-voltage activated' (HVA) group. They are blocked by dihydropyridines (DHP), phenylalkylamines, and by benzothiazepines. Calcium channels containing the alpha-1S subunit play an important role in excitation-contraction coupling in skele|tal muscle. The polypeptide is Voltage-dependent L-type calcium channel subunit alpha-1S (Aquarana catesbeiana (American bullfrog)).